The primary structure comprises 923 residues: Meiotic recombination protein rec11 (923 aa).

Residues L278 to I365 enclose the SCD domain.

The protein is Meiotic recombination protein rec11 (rec11) of Schizosaccharomyces pombe (strain 972 / ATCC 24843) (Fission yeast).